Reading from the N-terminus, the 379-residue chain is Alternative oxidase 1, mitochondrial (379 aa).

Residues 33–50 (TTTTSTKSRSSTSTAATT) show a composition bias toward low complexity. Positions 33–76 (TTTTSTKSRSSTSTAATTVGNSNPKSPIDEDNLEKPGTIPTKHK) are disordered. Residues Glu180, Glu219, and His222 each coordinate Fe cation. Residues 234-256 (WFTRSIIYIGQGVFTNIFFLVYL) traverse the membrane as a helical segment. Fe cation contacts are provided by Glu270, Glu271, Glu326, and His329.

Belongs to the alternative oxidase family. The cofactor is Fe cation.

Its subcellular location is the mitochondrion inner membrane. Its function is as follows. Catalyzes cyanide-resistant oxygen consumption. May increase respiration when the cytochrome respiratory pathway is restricted, or in response to low temperatures. This Candida albicans (Yeast) protein is Alternative oxidase 1, mitochondrial (AOX1).